The following is a 265-amino-acid chain: Putative hydro-lyase PA14_37210 (265 aa).

This sequence belongs to the D-glutamate cyclase family.

In Pseudomonas aeruginosa (strain UCBPP-PA14), this protein is Putative hydro-lyase PA14_37210.